A 312-amino-acid chain; its full sequence is R2-like ligand binding oxidase (312 aa).

Mn(2+) is bound by residues Glu-68, Glu-101, and His-104. Residues 71-162 (VTQDIQPFMA…AAQVRASATY (92 aa)) constitute a cross-link (3-(O4'-tyrosyl)-valine (Val-Tyr)). Glu-101 lines the Fe cation pocket. Fe cation is bound by residues Glu-167, Glu-202, and His-205.

It belongs to the ribonucleoside diphosphate reductase small chain family. R2-like ligand binding oxidase subfamily. In terms of assembly, homodimer. Fe cation is required as a cofactor. The cofactor is Mn(2+).

Its function is as follows. Probable oxidase that might be involved in lipid metabolism. The polypeptide is R2-like ligand binding oxidase (Mycobacterium sp. (strain KMS)).